The sequence spans 423 residues: Serine--tRNA ligase (423 aa).

231-233 (TGE) serves as a coordination point for L-serine. Residue 262-264 (RQE) coordinates ATP. Glu-285 contributes to the L-serine binding site. ATP is bound at residue 349 to 352 (EISS). L-serine is bound at residue Ser-385.

This sequence belongs to the class-II aminoacyl-tRNA synthetase family. Type-1 seryl-tRNA synthetase subfamily. As to quaternary structure, homodimer. The tRNA molecule binds across the dimer.

It is found in the cytoplasm. It carries out the reaction tRNA(Ser) + L-serine + ATP = L-seryl-tRNA(Ser) + AMP + diphosphate + H(+). The enzyme catalyses tRNA(Sec) + L-serine + ATP = L-seryl-tRNA(Sec) + AMP + diphosphate + H(+). The protein operates within aminoacyl-tRNA biosynthesis; selenocysteinyl-tRNA(Sec) biosynthesis; L-seryl-tRNA(Sec) from L-serine and tRNA(Sec): step 1/1. Its function is as follows. Catalyzes the attachment of serine to tRNA(Ser). Is also able to aminoacylate tRNA(Sec) with serine, to form the misacylated tRNA L-seryl-tRNA(Sec), which will be further converted into selenocysteinyl-tRNA(Sec). This chain is Serine--tRNA ligase, found in Phytoplasma mali (strain AT).